The following is a 616-amino-acid chain: MAEAKTHWLGASLSLILLIFLLATAEAASFQRNQLLQKEPDLRLENVQRFASPEMIRALEYIEKLRQQAHKEESSPDYNPYQGVSVPLQQKENSDLPESSRDSLSEDEWMKILLEALRQAENEPQSSLKENKPYTLNSEKNFPMDMPDDYETQQWPERKLEHMRFPPMYEENSRDNPFKRTNEIVEEQYTPQSLATLESVFQELGKLTGPNNQKRERVDEEQKLYTDDEDDIYKANNIAYEDVVGGEDWNPVEEKIESQTQEEVRDSKENIEKNEQINDEMKRSGQMGLQDEDLRKEGKDQLSEDVSKVIAYLKRLVNAVGSGKSQNGQNGERANRLFEKPLDSQSIYQLIELSRNLQIPPEDLIDMLKTGEKPNASVEPEQELEIPVDLDDISEVDLDHPDLFQNKMLSKNGYSKTPGRAVSEALPDGLSVEDILNLLGMENAANQKPPYFPNQYNREKILPRLPYGPGRAKANQLPKAVWMPDVENRQMAYDNLNDKDQELGEYLARMLVKYPEIMNSNQVKRVPSQGSSEDDLQEENQIEQAIKERLNQHSSQETDKLALVSKRLPVATPKSDDAPNRQYLDEDLLMKVLEYLNQEKAEKGREHIAKRAMENM.

A signal peptide spans Met1–Ala27. A propeptide spanning residues Ala28–Phe30 is cleaved from the precursor. Disordered stretches follow at residues Gln68–Leu104 and Ala120–Met146. Residues Glu92–Leu104 are compositionally biased toward basic and acidic residues. The segment covering Asn122–Lys140 has biased composition (polar residues). Tyr150 carries the sulfotyrosine modification. A phosphoserine mark is found at Ser173, Ser267, Ser431, Ser531, Ser554, and Ser555. A compositionally biased stretch (basic and acidic residues) spans Lys255–Arg283. The interval Lys255–Gln290 is disordered. The segment covering Glu548–Lys560 has biased composition (basic and acidic residues). A disordered region spans residues Glu548 to Gln582.

Belongs to the chromogranin/secretogranin protein family. Interacts with Secretogranin III/SCG3.

Its subcellular location is the secreted. Its function is as follows. Neuroendocrine protein of the granin family that regulates the biogenesis of secretory granules. This chain is Secretogranin-2 (SCG2), found in Sus scrofa (Pig).